The sequence spans 357 residues: DNA integrity scanning protein DisA (357 aa).

Residues 8 to 148 (PQELIEKIKL…NYKYVVNQVD (141 aa)) enclose the DAC domain. Residues Gly76, Leu94, Thr107, Thr111, and Arg128 each coordinate 3',3'-c-di-AMP.

This sequence belongs to the DisA family. As to quaternary structure, homooctamer. It depends on Mg(2+) as a cofactor.

It carries out the reaction 2 ATP = 3',3'-c-di-AMP + 2 diphosphate. Its activity is regulated as follows. Inhibited by 3'-dATP. In terms of biological role, participates in a DNA-damage check-point. DisA forms globular foci that rapidly scan along the chromosomes searching for lesions. Its function is as follows. Has diadenylate cyclase activity, catalyzing the condensation of 2 ATP molecules into cyclic di-AMP (c-di-AMP). c-di-AMP likely acts as a signaling molecule that may couple DNA integrity with a cellular process. This rate-limiting step is the accessibility of the active site; mutating the possible exit tunnel (residues 128-130) increases product 2-fold despite Arg-130 being important for ATP-binding. Does not convert GTP to c-di-GMP. The protein is DNA integrity scanning protein DisA of Thermotoga maritima (strain ATCC 43589 / DSM 3109 / JCM 10099 / NBRC 100826 / MSB8).